We begin with the raw amino-acid sequence, 179 residues long: Large ribosomal subunit protein uL5 (179 aa).

The protein belongs to the universal ribosomal protein uL5 family. In terms of assembly, part of the 50S ribosomal subunit; part of the 5S rRNA/L5/L18/L25 subcomplex. Contacts the 5S rRNA and the P site tRNA. Forms a bridge to the 30S subunit in the 70S ribosome.

Functionally, this is one of the proteins that bind and probably mediate the attachment of the 5S RNA into the large ribosomal subunit, where it forms part of the central protuberance. In the 70S ribosome it contacts protein S13 of the 30S subunit (bridge B1b), connecting the 2 subunits; this bridge is implicated in subunit movement. Contacts the P site tRNA; the 5S rRNA and some of its associated proteins might help stabilize positioning of ribosome-bound tRNAs. The sequence is that of Large ribosomal subunit protein uL5 from Aeromonas salmonicida (strain A449).